We begin with the raw amino-acid sequence, 367 residues long: Chorismate synthase (367 aa).

Arg48 contributes to the NADP(+) binding site. Residues Arg125–Ser127, Asn243–Ala244, Gly283, Lys298–Ser302, and Arg324 contribute to the FMN site.

This sequence belongs to the chorismate synthase family. Homotetramer. Requires FMNH2 as cofactor.

The enzyme catalyses 5-O-(1-carboxyvinyl)-3-phosphoshikimate = chorismate + phosphate. It participates in metabolic intermediate biosynthesis; chorismate biosynthesis; chorismate from D-erythrose 4-phosphate and phosphoenolpyruvate: step 7/7. Its function is as follows. Catalyzes the anti-1,4-elimination of the C-3 phosphate and the C-6 proR hydrogen from 5-enolpyruvylshikimate-3-phosphate (EPSP) to yield chorismate, which is the branch point compound that serves as the starting substrate for the three terminal pathways of aromatic amino acid biosynthesis. This reaction introduces a second double bond into the aromatic ring system. The protein is Chorismate synthase of Psychrobacter cryohalolentis (strain ATCC BAA-1226 / DSM 17306 / VKM B-2378 / K5).